A 314-amino-acid chain; its full sequence is DNA-directed RNA polymerase subunit alpha (314 aa).

An alpha N-terminal domain (alpha-NTD) region spans residues 1 to 229; it reads MLESKLKAPV…EHLNYFANPE (229 aa). An alpha C-terminal domain (alpha-CTD) region spans residues 246–314; the sequence is SAEEDLDLPL…LAKKGFTLKE (69 aa).

It belongs to the RNA polymerase alpha chain family. As to quaternary structure, homodimer. The RNAP catalytic core consists of 2 alpha, 1 beta, 1 beta' and 1 omega subunit. When a sigma factor is associated with the core the holoenzyme is formed, which can initiate transcription.

It catalyses the reaction RNA(n) + a ribonucleoside 5'-triphosphate = RNA(n+1) + diphosphate. DNA-dependent RNA polymerase catalyzes the transcription of DNA into RNA using the four ribonucleoside triphosphates as substrates. The sequence is that of DNA-directed RNA polymerase subunit alpha (rpoA) from Thermus aquaticus.